The following is a 397-amino-acid chain: MSVAFAGNSTSGSSREAGPLRVMIVDDSVVIRGLISRWVGAEHDMEVAASLRTGLEAVNQLERINPDVAVLDIEMPELDGISALPQLLAKKRDLVIIMASTLTRRNAEISFKALSLGAADYIPKPESTREASAADTFHHDLIQKIRHLGARLRRKAAVASPPLAPASPPPAARAPFVARPAAPAPAANALLPGALSTRPFSTLAPKVLLIGSSTGGPQALMALVTELGPVIDRFPVLITQHMPPTFTTILAEHLARSSRRPAAEAVDGEPVKPGRIYLAPGGKHMRVVRSGADVAIALDDGPAVNFCKPAVDPLFTSAIDIWHGAILSVILTGMGSDGMRGGKDIVAAGGSVIAQDEASSVVWGMPGAAANAGICAAILPLNQIGAKVNRLFAGDRS.

A Response regulatory domain is found at 21–139 (RVMIVDDSVV…EASAADTFHH (119 aa)). Asp-72 is subject to 4-aspartylphosphate. The 190-residue stretch at 199–388 (PFSTLAPKVL…LPLNQIGAKV (190 aa)) folds into the CheB-type methylesterase domain. Active-site residues include Ser-213, His-241, and Asp-337.

Belongs to the CheB family. Post-translationally, phosphorylated by CheA. Phosphorylation of the N-terminal regulatory domain activates the methylesterase activity.

Its subcellular location is the cytoplasm. The enzyme catalyses [protein]-L-glutamate 5-O-methyl ester + H2O = L-glutamyl-[protein] + methanol + H(+). The catalysed reaction is L-glutaminyl-[protein] + H2O = L-glutamyl-[protein] + NH4(+). Involved in chemotaxis. Part of a chemotaxis signal transduction system that modulates chemotaxis in response to various stimuli. Catalyzes the demethylation of specific methylglutamate residues introduced into the chemoreceptors (methyl-accepting chemotaxis proteins or MCP) by CheR. Also mediates the irreversible deamidation of specific glutamine residues to glutamic acid. The sequence is that of Protein-glutamate methylesterase/protein-glutamine glutaminase of group 2 operon from Bradyrhizobium diazoefficiens (strain JCM 10833 / BCRC 13528 / IAM 13628 / NBRC 14792 / USDA 110).